Reading from the N-terminus, the 395-residue chain is S-adenosylmethionine synthase (395 aa).

Residue H14 participates in ATP binding. D16 serves as a coordination point for Mg(2+). Residue E42 participates in K(+) binding. The L-methionine site is built by E55 and Q98. Residues 98-108 (QSPDIAMGVDK) form a flexible loop region. ATP contacts are provided by residues 175-177 (DGK), 242-243 (RF), D251, 257-258 (RK), A274, and K278. Residue D251 participates in L-methionine binding. Position 282 (K282) interacts with L-methionine.

Belongs to the AdoMet synthase family. In terms of assembly, homotetramer; dimer of dimers. It depends on Mg(2+) as a cofactor. The cofactor is K(+).

It is found in the cytoplasm. The catalysed reaction is L-methionine + ATP + H2O = S-adenosyl-L-methionine + phosphate + diphosphate. The protein operates within amino-acid biosynthesis; S-adenosyl-L-methionine biosynthesis; S-adenosyl-L-methionine from L-methionine: step 1/1. Functionally, catalyzes the formation of S-adenosylmethionine (AdoMet) from methionine and ATP. The overall synthetic reaction is composed of two sequential steps, AdoMet formation and the subsequent tripolyphosphate hydrolysis which occurs prior to release of AdoMet from the enzyme. The chain is S-adenosylmethionine synthase from Thermosipho melanesiensis (strain DSM 12029 / CIP 104789 / BI429).